Consider the following 38-residue polypeptide: Small ribosomal subunit protein uS12c (38 aa).

A disordered region spans residues 1 to 26 (MPTIQQLIRNARQPIENRKKSPALRG).

The protein belongs to the universal ribosomal protein uS12 family. Part of the 30S ribosomal subunit.

It localises to the plastid. It is found in the chloroplast. With S4 and S5 plays an important role in translational accuracy. Located at the interface of the 30S and 50S subunits. This is Small ribosomal subunit protein uS12c (rps12) from Pinus contorta (Shore pine).